A 139-amino-acid polypeptide reads, in one-letter code: ATP synthase epsilon chain (139 aa).

The protein belongs to the ATPase epsilon chain family. As to quaternary structure, F-type ATPases have 2 components, CF(1) - the catalytic core - and CF(0) - the membrane proton channel. CF(1) has five subunits: alpha(3), beta(3), gamma(1), delta(1), epsilon(1). CF(0) has three main subunits: a, b and c.

Its subcellular location is the cell inner membrane. Functionally, produces ATP from ADP in the presence of a proton gradient across the membrane. The sequence is that of ATP synthase epsilon chain from Pseudomonas putida (strain ATCC 47054 / DSM 6125 / CFBP 8728 / NCIMB 11950 / KT2440).